The sequence spans 292 residues: GTP cyclohydrolase FolE2 (292 aa).

Belongs to the GTP cyclohydrolase IV family.

It catalyses the reaction GTP + H2O = 7,8-dihydroneopterin 3'-triphosphate + formate + H(+). Its pathway is cofactor biosynthesis; 7,8-dihydroneopterin triphosphate biosynthesis; 7,8-dihydroneopterin triphosphate from GTP: step 1/1. Its function is as follows. Converts GTP to 7,8-dihydroneopterin triphosphate. This is GTP cyclohydrolase FolE2 from Staphylococcus aureus (strain MRSA252).